Consider the following 133-residue polypeptide: UPF0102 protein CYA_0680 (133 aa).

This sequence belongs to the UPF0102 family.

This chain is UPF0102 protein CYA_0680, found in Synechococcus sp. (strain JA-3-3Ab) (Cyanobacteria bacterium Yellowstone A-Prime).